A 157-amino-acid polypeptide reads, in one-letter code: UPF0225 protein Psyr_3863 (157 aa).

Belongs to the UPF0225 family.

This Pseudomonas syringae pv. syringae (strain B728a) protein is UPF0225 protein Psyr_3863.